Here is a 311-residue protein sequence, read N- to C-terminus: MVSTATQIGHFSFDNCLMNAAGVYCMTKEELMEVEKSQAASFVTKTGTLEVRPGNPEPRYADTRLGSINSMGLPNNGFRYYLDFVSDLAKTGQHKPHFLSVVGLSPTETETILKVIMASDYEGLVELNLSCPNVPGKPQIAYDFETTDQLLENIFTYYTKPLGIKLPPYFDIVHFDQAAAIFNKYPLSFVNCVNSIGNGLVIEDEQVLIKPKNGFGGIGGDYIKPTALANVHAFYKRLKPSIHIIGTGGIKTGRDAFEHILCGASMVQIGTALHQEGPAIFERVTKELKTIMVEKGYQSLDDFRGNLRYKD.

Substrate is bound by residues Lys-45, 69–73 (NSMGL), and Asn-128. 45-46 (KT) is an FMN binding site. Residue Asn-128 coordinates FMN. Cys-131 acts as the Nucleophile in catalysis. FMN is bound by residues Lys-165 and Val-193. A substrate-binding site is contributed by 194 to 195 (NS). Residues Gly-220, 248–249 (GG), and 270–271 (GT) contribute to the FMN site.

The protein belongs to the dihydroorotate dehydrogenase family. Type 1 subfamily. As to quaternary structure, homodimer. It depends on FMN as a cofactor.

The protein localises to the cytoplasm. It carries out the reaction (S)-dihydroorotate + fumarate = orotate + succinate. The protein operates within pyrimidine metabolism; UMP biosynthesis via de novo pathway. Its function is as follows. Catalyzes the conversion of dihydroorotate to orotate with fumarate as the electron acceptor. This chain is Putative dihydroorotate dehydrogenase A (fumarate) (pyrD), found in Streptococcus pyogenes serotype M3 (strain SSI-1).